The chain runs to 559 residues: Glucose-6-phosphate isomerase (559 aa).

Catalysis depends on Glu352, which acts as the Proton donor. Catalysis depends on residues His383 and Lys511.

The protein belongs to the GPI family.

It is found in the cytoplasm. The catalysed reaction is alpha-D-glucose 6-phosphate = beta-D-fructose 6-phosphate. It functions in the pathway carbohydrate biosynthesis; gluconeogenesis. It participates in carbohydrate degradation; glycolysis; D-glyceraldehyde 3-phosphate and glycerone phosphate from D-glucose: step 2/4. In terms of biological role, catalyzes the reversible isomerization of glucose-6-phosphate to fructose-6-phosphate. The protein is Glucose-6-phosphate isomerase of Chlorobaculum tepidum (strain ATCC 49652 / DSM 12025 / NBRC 103806 / TLS) (Chlorobium tepidum).